The chain runs to 994 residues: MKLQSILSCWAILVAQIWATTDGLTDLVAWDPYSLTVNGNRLFVYSGEFHYPRLPVPEMWLDVFQKMRAHGFNAVSLYFFWDYHSPINGTYDFETGAHNIQRLFDYAQEAGIYIIARAGPYCNAEFNGGGLALYLSDGSGGELRTSDATYHQAWTPWIERIGKIIADNSITNGGPVILNQIENELQETTHSASNTLVEYMEQIEEAFRAAGVDVPFTSNEKGQRSRSWSTDYEDVGGAVNVYGLDSYPGGLSCTNPSTGFSVLRNYYQWFQNTSYTQPEYLPEFEGGWFSAWGADSFYDQCTSELSPQFADVYYKNNIGQRVTLQNLYMLYGGTNWGHLAAPVVYTSYDYSAPLRETRQIRDKLSQTKLVGLFTRVSSGLLGVEMEGNGTSYTSTTSAYTWVLRNPNTTAGFYVVQQDTTSSQTDITFSLNVNTSAGAFTLPNINLQGRQSKVISTDYPLGHSTLLYVSTDIATYGTFGDTDVVVLYARSGQVVSFAFKNTTKLTFEEYGDSVNLTSSSGNRTITSYTYTQGSGTSVVKFSNGAIFYLVETETAFRFWAPPTTTDPYVTAEQQIFVLGPYLVRNVSISGSVVDLVGDNDNATTVEVFAGSPAKAVKWNGKEITVTKTDYGSLVGSIGGADSSSITIPSLTGWKVRDSLPEIQSSYDDSKWTVCNKTTTLSPVDPLSLPVLFASDYGYYTGIKIYRGRFDGTNVTGANLTAQGGLAFGWNVWLNGDLVASLPGDADETSSNAAIDFSNHTLKQTDNLLTVVIDYTGHDETSTGDGVENPRGLLGATLNGGSFTSWKIQGNAGGAAGAYELDPVRAPMNEGGLLAERQGWHLPGYKAKSSDGWTDGSPLDGLNKSGVAFYLTTFTLDLPKKYDVPLGIQFTSPSTVDPVRIQLFINGYQYGKYVPYLGPQTTFPIPPGIINNRDKNTIGLSLWAQTDAGAKLENIELISYGAYESGFDAGNGTGFDLNGAKLGYQPEWTEARAKYT.

Residues 1–19 (MKLQSILSCWAILVAQIWA) form the signal peptide. Tyr-78 contacts substrate. Residue Asn-88 is glycosylated (N-linked (GlcNAc...) asparagine). Positions 123, 124, 125, and 183 each coordinate substrate. The active-site Proton donor is Glu-184. Residue Tyr-247 participates in substrate binding. Cys-253 and Cys-301 are oxidised to a cystine. N-linked (GlcNAc...) asparagine glycosylation is present at Asn-272. Glu-283 acts as the Nucleophile in catalysis. Substrate is bound at residue Tyr-350. Residues Asn-388, Asn-407, Asn-433, Asn-500, Asn-514, Asn-521, Asn-584, Asn-600, Asn-674, Asn-712, Asn-717, Asn-757, Asn-861, and Asn-969 are each glycosylated (N-linked (GlcNAc...) asparagine).

Belongs to the glycosyl hydrolase 35 family.

It localises to the secreted. It catalyses the reaction Hydrolysis of terminal non-reducing beta-D-galactose residues in beta-D-galactosides.. In terms of biological role, cleaves beta-linked terminal galactosyl residues from gangliosides, glycoproteins, and glycosaminoglycans. The polypeptide is Probable beta-galactosidase C (lacC) (Aspergillus niger (strain ATCC MYA-4892 / CBS 513.88 / FGSC A1513)).